The following is a 464-amino-acid chain: Soluble pyridine nucleotide transhydrogenase (464 aa).

FAD is bound at residue 35–44 (DDRPQVGGNC).

The protein belongs to the class-I pyridine nucleotide-disulfide oxidoreductase family. The cofactor is FAD.

Its subcellular location is the cytoplasm. The catalysed reaction is NAD(+) + NADPH = NADH + NADP(+). Its function is as follows. Conversion of NADPH, generated by peripheral catabolic pathways, to NADH, which can enter the respiratory chain for energy generation. In Azotobacter vinelandii (strain DJ / ATCC BAA-1303), this protein is Soluble pyridine nucleotide transhydrogenase.